The chain runs to 284 residues: UPF0294 protein VV1_1880 (284 aa).

Belongs to the UPF0294 family.

Its subcellular location is the cytoplasm. The sequence is that of UPF0294 protein VV1_1880 from Vibrio vulnificus (strain CMCP6).